Consider the following 130-residue polypeptide: Small ribosomal subunit protein uS9 (130 aa).

The tract at residues 105–130 (TRDARMKERKKPGLKKARKASQFSKR) is disordered. Residues 111 to 130 (KERKKPGLKKARKASQFSKR) show a composition bias toward basic residues.

This sequence belongs to the universal ribosomal protein uS9 family.

The protein is Small ribosomal subunit protein uS9 of Lactiplantibacillus plantarum (strain ATCC BAA-793 / NCIMB 8826 / WCFS1) (Lactobacillus plantarum).